Consider the following 872-residue polypeptide: Protein SCD5 (872 aa).

2 disordered regions span residues 1 to 98 (MSFD…SGGD) and 209 to 239 (PKPR…TGDQ). A compositionally biased stretch (polar residues) spans 48–85 (FWDQGSRSHSDTTLSYRNNHSNTAADNATNVSSPQKDN). A KKRVK motif; Required for interaction with GLC7, endocytosis and actin cytoskeleton organization motif is present at residues 272–276 (KKVRF). Disordered regions lie at residues 280–321 (ITFQ…LDFT) and 338–358 (SGLV…KKVL). Polar residues-rich tracts occupy residues 284–296 (DPPN…SNNS) and 339–348 (GLVSSLPSEQ). 12 repeat units span residues 405-424 (QLPL…HLVR), 439-458 (QTGL…YLMR), 479-498 (SGGL…YLMK), 534-545 (SPNITLPQSNQQ), 564-575 (SPQHTYSNNVRI), 593-604 (PPQNTLPQHQQS), 608-619 (SPQNTIPQHQRS), 623-634 (SPQNTFTQNQPI), 636-647 (SPQHTYSNNQAT), 650-661 (SPQNTYTNNQQQ), 683-694 (PPQHMYSNVQKQ), and 717-728 (SPQNAANSYFQS). The tract at residues 405 to 448 (QLPLEPLKPTATGSANHLVREEYNQGLHPSNGAIQTGLQPLKPT) is 3 X 20 AA approximate repeats. A phosphothreonine; by PRK1 mark is found at threonine 416 and threonine 450. Positions 460-489 (HMEQPQSIKPSSTPETVTNSGGLQPLKPTA) are disordered. Over residues 462-481 (EQPQSIKPSSTPETVTNSGG) the composition is skewed to polar residues. Threonine 490 carries the post-translational modification Phosphothreonine; by PRK1. 2 disordered regions span residues 516-571 (QFTN…TYSN) and 591-620 (AFPP…QRSQ). The tract at residues 534–728 (SPNITLPQSN…QNAANSYFQS (195 aa)) is 9 X 12 AA approximate repeats. Serine 564 bears the Phosphoserine mark. Residues 594-620 (PQNTLPQHQQSHLLSPQNTIPQHQRSQ) are compositionally biased toward polar residues. Positions 649–681 (ISPQNTYTNNQQQPQHLPPPPPPRAQQQQQGAI) are disordered. Residues 651–663 (PQNTYTNNQQQPQ) show a composition bias toward low complexity. A compositionally biased stretch (polar residues) spans 697–727 (LVPTQPSYTNSPSIQSPNFLSPQNAANSYFQ). Disordered regions lie at residues 697–758 (LVPT…ISSF) and 806–838 (NSDI…QFPF). Low complexity predominate over residues 728-745 (SLLSSSPSPNPTPSNAST). Polar residues-rich tracts occupy residues 746–758 (VNGN…ISSF) and 806–815 (NSDIHSQPNK). Positions 823–835 (QQVHQQQQQQQQQ) are enriched in low complexity.

Interacts (via KKVRF motif) with phosphatase GLC7. In terms of processing, phosphorylation by PRK1 and/or AKL1 on Thr-416, Thr-450 and Thr-490 of repeats 1-1, 1-2 and/or 1-3 negatively regulates SCD5 function in endocytosis and actin cytoskeleton organization.

Its subcellular location is the membrane. Functionally, regulates both fluid phase and receptor-mediated endocytosis. Involved in vesicular transport at a late stage of the secretory pathway. Regulates actin cytoskeleton organization. The sequence is that of Protein SCD5 (SCD5) from Saccharomyces cerevisiae (strain ATCC 204508 / S288c) (Baker's yeast).